A 118-amino-acid polypeptide reads, in one-letter code: NADH-ubiquinone oxidoreductase chain 3 (118 aa).

2 helical membrane passes run 7-27 and 87-107; these read ICIY…LPFL and IDPF…IGSL.

It belongs to the complex I subunit 3 family.

It is found in the mitochondrion membrane. It carries out the reaction a ubiquinone + NADH + 5 H(+)(in) = a ubiquinol + NAD(+) + 4 H(+)(out). Functionally, core subunit of the mitochondrial membrane respiratory chain NADH dehydrogenase (Complex I) that is believed to belong to the minimal assembly required for catalysis. Complex I functions in the transfer of electrons from NADH to the respiratory chain. The immediate electron acceptor for the enzyme is believed to be ubiquinone. The polypeptide is NADH-ubiquinone oxidoreductase chain 3 (ND3) (Solanum tuberosum (Potato)).